The sequence spans 39 residues: Natriuretic peptide CnNP-b (39 aa).

A propeptide spanning residues 1-8 (SGSKTATK) is cleaved from the precursor. A disulfide bridge connects residues Cys12 and Cys28. The segment at 20–39 (IGSTSGMGCGGVPKPTPGGS) is disordered.

Belongs to the natriuretic peptide family. Expressed by the venom gland.

The protein resides in the secreted. Its function is as follows. Snake venom natriuretic peptide that targets both NPR1 and NPR2. Exhibits hypotensive and vasodepressor activities. The protein is Natriuretic peptide CnNP-b of Cryptophis nigrescens (Eastern small-eyed snake).